The following is a 287-amino-acid chain: Inhibitory synaptic factor 1 (287 aa).

The disordered stretch occupies residues 1-22 (MSQSRAPAREPSETPSQREQIR). Residues 25–58 (MKMVIQQLEGILKELKDVAHELREVVGQIDKLTS) adopt a coiled-coil conformation. Disordered regions lie at residues 113–174 (RRSA…GTRE) and 189–287 (CDDD…NKDL). Residues 153–167 (EEASSSTHSQSQKTS) show a composition bias toward low complexity. Residues 189–209 (CDDDEDEDEDEDGRDEEEDKL) show a composition bias toward acidic residues. Residues 259-274 (RNSSTQTVSDKSTQTL) are compositionally biased toward polar residues.

This sequence belongs to the INSYN1 family.

It localises to the postsynaptic density. In terms of biological role, may be a component of the protein machinery at the inhibitory synapses, probably acting as a scaffold. This is Inhibitory synaptic factor 1 from Danio rerio (Zebrafish).